A 215-amino-acid polypeptide reads, in one-letter code: NAD(P)H-quinone oxidoreductase subunit I (215 aa).

2 consecutive 4Fe-4S ferredoxin-type domains span residues 55–84 (GRIHYEFDKCIACEVCVRVCPINLPVVDWV) and 95–124 (RNYSIDFGVCIFCGNCVEYCPTNCLSMTEE). Positions 64, 67, 70, 74, 104, 107, 110, and 114 each coordinate [4Fe-4S] cluster. A disordered region spans residues 166–215 (AGEMDPHGVPNDRPRAGQLPSQVLETLAPPAKVGAKNEGQSTGTTQEGEA). Positions 169–180 (MDPHGVPNDRPR) are enriched in basic and acidic residues. Polar residues predominate over residues 203-215 (EGQSTGTTQEGEA).

The protein belongs to the complex I 23 kDa subunit family. NDH-1 is composed of at least 11 different subunits. The cofactor is [4Fe-4S] cluster.

The protein localises to the cellular thylakoid membrane. It carries out the reaction a plastoquinone + NADH + (n+1) H(+)(in) = a plastoquinol + NAD(+) + n H(+)(out). It catalyses the reaction a plastoquinone + NADPH + (n+1) H(+)(in) = a plastoquinol + NADP(+) + n H(+)(out). NDH-1 shuttles electrons from an unknown electron donor, via FMN and iron-sulfur (Fe-S) centers, to quinones in the respiratory and/or the photosynthetic chain. The immediate electron acceptor for the enzyme in this species is believed to be plastoquinone. Couples the redox reaction to proton translocation, and thus conserves the redox energy in a proton gradient. The sequence is that of NAD(P)H-quinone oxidoreductase subunit I from Parasynechococcus marenigrum (strain WH8102).